A 355-amino-acid chain; its full sequence is Protein RecA (355 aa).

Residue 69–76 (GPESSGKT) participates in ATP binding. Positions 329–355 (AYGLPDREETKREETAQIPDTEKTKDV) are disordered.

The protein belongs to the RecA family.

The protein resides in the cytoplasm. Functionally, can catalyze the hydrolysis of ATP in the presence of single-stranded DNA, the ATP-dependent uptake of single-stranded DNA by duplex DNA, and the ATP-dependent hybridization of homologous single-stranded DNAs. It interacts with LexA causing its activation and leading to its autocatalytic cleavage. The polypeptide is Protein RecA (Desulfotalea psychrophila (strain LSv54 / DSM 12343)).